The following is a 290-amino-acid chain: Nucleotide-binding protein XfasM23_0667 (290 aa).

Position 13 to 20 (13 to 20) interacts with ATP; sequence GLSGSGKS. 65 to 68 contacts GTP; sequence DIRS.

This sequence belongs to the RapZ-like family.

Displays ATPase and GTPase activities. The protein is Nucleotide-binding protein XfasM23_0667 of Xylella fastidiosa (strain M23).